The sequence spans 381 residues: Pulmonary surfactant-associated protein B (381 aa).

A signal peptide spans 1–24; the sequence is MAESHLLQWLLLLLPTLCGPGTAA. Residues 25-65 form the Saposin A-type domain; that stretch reads WTTSSLACAQGPEFWCQSLEQALQCRALGHCLQEVWGHVGA. Residues 25 to 200 constitute a propeptide that is removed on maturation; that stretch reads WTTSSLACAQ…PHTQDLSEQQ (176 aa). Saposin B-type domains lie at 65–147, 204–281, and 295–370; these read ADDL…KSRQ, PLPY…SMDD, and RDSE…GTMS. 9 disulfide bridges follow: Cys-69/Cys-143, Cys-72/Cys-137, Cys-100/Cys-112, Cys-208/Cys-277, Cys-211/Cys-271, Cys-235/Cys-246, Cys-299/Cys-366, Cys-302/Cys-360, and Cys-325/Cys-335. N-linked (GlcNAc...) asparagine glycosylation is present at Asn-129. The propeptide occupies 280 to 381; it reads DDSAGPRSPT…PLQCIHSPDL (102 aa). Asn-311 carries N-linked (GlcNAc...) asparagine glycosylation.

As to quaternary structure, homodimer; disulfide-linked.

The protein resides in the secreted. It localises to the extracellular space. It is found in the surface film. Functionally, pulmonary surfactant-associated proteins promote alveolar stability by lowering the surface tension at the air-liquid interface in the peripheral air spaces. SP-B increases the collapse pressure of palmitic acid to nearly 70 millinewtons per meter. The chain is Pulmonary surfactant-associated protein B (SFTPB) from Homo sapiens (Human).